We begin with the raw amino-acid sequence, 662 residues long: DNA ligase (662 aa).

Residues 31–35 (DKDYD) and 79–80 (SL) each bind NAD(+). Lysine 121 (N6-AMP-lysine intermediate) is an active-site residue. NAD(+)-binding residues include arginine 143, glutamate 177, and lysine 313. Residues cysteine 406, cysteine 409, cysteine 422, and cysteine 428 each coordinate Zn(2+). The BRCT domain maps to 586 to 662 (VLESPFMGKT…LSEEEFENMI (77 aa)).

The protein belongs to the NAD-dependent DNA ligase family. LigA subfamily. It depends on Mg(2+) as a cofactor. Requires Mn(2+) as cofactor.

The enzyme catalyses NAD(+) + (deoxyribonucleotide)n-3'-hydroxyl + 5'-phospho-(deoxyribonucleotide)m = (deoxyribonucleotide)n+m + AMP + beta-nicotinamide D-nucleotide.. Its function is as follows. DNA ligase that catalyzes the formation of phosphodiester linkages between 5'-phosphoryl and 3'-hydroxyl groups in double-stranded DNA using NAD as a coenzyme and as the energy source for the reaction. It is essential for DNA replication and repair of damaged DNA. The chain is DNA ligase from Clostridium perfringens (strain 13 / Type A).